Consider the following 609-residue polypeptide: Cell division protein DipM (609 aa).

An N-terminal signal peptide occupies residues 1 to 24 (MRQLWTQAAVIALTAGTLGAPAHA). The segment at 21 to 103 (PAHASGQSGQ…PVLRATPPRT (83 aa)) is disordered. Residues 25-38 (SGQSGQRFTPNFPI) show a composition bias toward polar residues. Over residues 79–93 (LPPPAPVSTPAPAPQ) the composition is skewed to pro residues. 2 LysM domains span residues 121–165 (QVRV…KIKG) and 171–215 (KAYV…KLLL). 2 stretches are compositionally biased toward low complexity: residues 242–258 (AEPA…AATP) and 265–280 (PVSE…STTT). The disordered stretch occupies residues 242-280 (AEPAPATTRPATPAATPSRPVRQPVSEETSEPATTSTTT). LysM domains lie at 295-339 (QVHT…KIKG) and 345-389 (KAYS…KIAL). Positions 389-457 (LPDGFRDKGP…AAQPITPPPS (69 aa)) are disordered. Residues 400–429 (RTTTTTRPATPPANTYARVDSSAAAASTPS) show a composition bias toward low complexity. A lytM region spans residues 503-603 (NDGLNIRAPQ…VKDKAKPVDP (101 aa)).

The protein resides in the periplasm. In terms of biological role, required for efficient cell division, cell polarity and normal cell morphology. Facilitates remodeling of the peptidoglycan layer and, thus, coordinated constriction of the cell envelope during the division process. Plays a critical role in maintaining proper cell envelope architecture during growth and division. Required for normal envelope invagination during cell division and to establish or maintain outer membrane connections throughout the cell envelope. May serve as a regulatory hub coordinating the activities of multiple peptidoglycan-degrading enzymes during cell constriction. Required to position SdpA and SdpB at midcell. The polypeptide is Cell division protein DipM (Caulobacter vibrioides (strain NA1000 / CB15N) (Caulobacter crescentus)).